The primary structure comprises 580 residues: Viral transcription factor IE2 (580 aa).

Residues 1–11 (MESSAKRKMDP) are compositionally biased toward basic and acidic residues. Disordered stretches follow at residues 1-30 (MESS…TPVT) and 99-161 (DSSS…VIIK). Over residues 99–133 (DSSSTGPTLTTHSCSVSSAPLNKPTPTSVAVTNTP) the composition is skewed to polar residues. Residues Lys175 and Lys180 each participate in a glycyl lysine isopeptide (Lys-Gly) (interchain with G-Cter in SUMO) cross-link. An SUMO-interacting motif 1/SIM1 motif is present at residues 199 to 202 (CIVI). The segment at 200–208 (IVISDSEEE) is non-covalent SUMO1 binding region (SIM). Phosphoserine occurs at positions 203 and 205. The disordered stretch occupies residues 206 to 336 (EEEQGEEVET…SKRISELDNE (131 aa)). Low complexity-rich tracts occupy residues 216 to 236 (RGAT…TSPT), 259 to 271 (SSSS…SASD), and 302 to 317 (AASS…SSGG). An SUMO-interacting motif 1/SIM2 motif is present at residues 410–413 (IQII). The SUMO-interacting motif 1/SIM3 motif lies at 501–504 (VDLL).

It belongs to the HHV-5 IE2 protein family. As to quaternary structure, interacts with host SUMO-modified form of TATA-binding protein (TBP)-associated factor 12/TAF12 in a SIM-dependent manner; this interaction increases the transactivation activity of IE2. Interacts with host CHAF1A. Interacts with several components of the host transcriptional machinery including TBP, TF2B and CREB1. Interacts with host DNA replication licensing factor MCM3. Interacts with host PLSCR1; this interaction inhibits IE2 transactivating activity. In terms of processing, phosphorylated by host CK2 at Ser-203 and Ser-205; leading to enhanced SUMOylation. SUMOylated; SUMOylation is enhanced when IE2 is phosphorylated by host CK2. The sumoylation is necessary for efficient replication of the virus and thus for the function of this viral transcription factor.

It is found in the host nucleus. Stimulates viral early and late gene expression and thus play a crucial role in the regulation of productive infection. Selectively drives host RNA Pol II transcription initiation at a subset of viral early-late and late promoters without substantially affecting Pol II transcription of expressed host genes. Mechanistically, forms a repressive complex at the major immediate-early promoter region involving direct association with host nucleosomes and TBP. Concerning activation, stimulates transcription by binding nearby, but not within, core promoter regions. In addition, activates quiescent cells to reenter the cell cycle and up-regulates several E2F-responsive genes, which are responsible for pushing the cell into S phase. In S-phase, inhibits cellular DNA synthesis and blocks further cell cycle progression. The polypeptide is Viral transcription factor IE2 (UL122) (Homo sapiens (Human)).